The chain runs to 3176 residues: Large tegument protein deneddylase (3176 aa).

Residues 1 to 12 (MSNGDWGQSQRP) show a composition bias toward polar residues. Residues 1–28 (MSNGDWGQSQRPRGTGPMRGIRTMDVNA) form a disordered region. The deubiquitination activity stretch occupies residues 1–268 (MSNGDWGQSQ…YEANGSGFDL (268 aa)). The region spanning 41 to 258 (LGTASCNQAH…MLEHYGVYDF (218 aa)) is the Peptidase C76 domain. Residues cysteine 61, aspartate 193, and histidine 195 contribute to the active site. The tract at residues 319–342 (PAARYSPAKTNSPPPSPASAAPAS) is disordered. 5 repeat units span residues 335–339 (PASAA), 340–344 (PASAA), 345–349 (PASAA), 350–354 (PASAA), and 355–359 (PASAA). Positions 335–384 (PASAAPASAAPASAAPASAAPASAAQASVAPASVAPASAAPASAAPDSAA) are 10 X 5 AA approximate repeats of P-A-S-A-A. One copy of the 6; approximate repeat lies at 360–364 (QASVA). One copy of the 7; approximate repeat lies at 365–369 (PASVA). Tandem repeats lie at residues 370 to 374 (PASAA) and 375 to 379 (PASAA). A compositionally biased stretch (low complexity) spans 376 to 386 (ASAAPDSAAPA). 6 disordered regions span residues 376–683 (ASAA…GSGL), 928–950 (LLSG…SIYR), 1170–1193 (APIS…TPPL), 1435–1461 (LMET…RARE), 2610–3008 (GLVS…PGAR), and 3023–3043 (TYTV…KMPK). The 10; approximate repeat unit spans residues 380 to 384 (PDSAA). Pro residues predominate over residues 457 to 488 (PRPPVPPHRPPSAARLPPPVIPIPHQSPPASP). Positions 519–546 (AAPSNPEIPLTTPSPSPTAAAAPTATTL) are enriched in low complexity. Residues 579 to 636 (APSPLLPQQQPPPSAAPAPSPLLPQQQPPPSAARAPSPLPPQQQPLPSATPAPPPAQQ) are compositionally biased toward pro residues. The interval 581–611 (SPLLPQQQPPPSAAPAPSPLLPQQQPPPSAA) is interaction with inner tegument protein. Residues 1170 to 1182 (APISPASPSATPA) are compositionally biased toward low complexity. Polar residues predominate over residues 2619-2630 (SADNTPASSDRL). A compositionally biased stretch (low complexity) spans 2643–2654 (EGSTTAESEASG). Residues 2738-2747 (QPAPQQPPSS) are compositionally biased toward pro residues. Composition is skewed to polar residues over residues 2761–2772 (SPHSTPSTASGS) and 2811–2831 (SAAS…SSQD). Basic and acidic residues predominate over residues 2839–2854 (MQREKKQQGGREEAAE). 2 stretches are compositionally biased toward low complexity: residues 2872–2886 (APVV…ATPA) and 2901–2912 (APALGSGLAAPA).

This sequence belongs to the herpesviridae large tegument protein family. As to quaternary structure, interacts with host CUL1 and CUL4A; these interactions inhibit the E3 ligase activity of cullins. Interacts with inner tegument protein. Interacts with capsid vertex specific component CVC2. Interacts with the major capsid protein/MCP. Interacts with host TRIM25 and YWHAZ.

It localises to the virion tegument. Its subcellular location is the host cytoplasm. The protein localises to the host nucleus. The enzyme catalyses Thiol-dependent hydrolysis of ester, thioester, amide, peptide and isopeptide bonds formed by the C-terminal Gly of ubiquitin (a 76-residue protein attached to proteins as an intracellular targeting signal).. Functionally, large tegument protein that plays multiple roles in the viral cycle. During viral entry, remains associated with the capsid while most of the tegument is detached and participates in the capsid transport toward the host nucleus. Plays a role in the routing of the capsid at the nuclear pore complex and subsequent uncoating. Within the host nucleus, acts as a deneddylase and promotes the degradation of nuclear CRLs (cullin-RING ubiquitin ligases) and thereby stabilizes nuclear CRL substrates, while cytoplasmic CRLs remain unaffected. These modifications prevent host cell cycle S-phase progression and create a favorable environment allowing efficient viral genome replication. Participates later in the secondary envelopment of capsids. Indeed, plays a linker role for the association of the outer viral tegument to the capsids together with the inner tegument protein. Counteracts host TLR-mediated NF-kappa-B activation through both MYD88 and TICAM1-dependent pathways by interfering with 'Lys-63'- and 'Lys-48'-linked ubiquitination of signaling intermediates such as TRAF6 and IKBKG. Inhibits type I interferon production by forming a tri-molecular complex with host TRIM25 and 14-3-3 thereby promoting TRIM25 autoubiquitination and sequestration of the ligase into inactive protein aggregates. In turn, host RIGI is recruited to the complex but ubiquitination is severely impaired leading to inhibition of the pathway. Also catalyzes the removal of 'Lys-48'- and 'Lys-63'-linked ubiquitin chains on host TBK1 and STING1 suppressing cGAS-STING signaling in addition to the RIGI-MAVS pathway. Inhibits selective autophagy by deubiquitinating host SQSTM1. In turn, decreased SQSTM1 ubiquitination fails to recruit LC3 to SQSTM1-positive aggregates. In the host nucleus, deubiquitinates topoisomerase II subunits TOP2A and TOP2B thereby stabilizing SUMOylated TOP2 which halts the DNA damage response to TOP2-induced double strand DNA breaks and promotes cell survival. This is Large tegument protein deneddylase from Homo sapiens (Human).